The following is a 947-amino-acid chain: Protocadherin alpha-4 (947 aa).

A signal peptide spans 1–29; the sequence is MEFSWGSGQESQRLLLSFLFLAIWEPGNS. Cadherin domains are found at residues 30-133, 134-242, 243-350, 351-455, 456-565, and 573-681; these read QLHY…PPTF, PTTQ…SPVF, DRSL…APEL, EFKS…APAF, AQPE…APTL, and SGGI…APSR. The Extracellular segment spans residues 30-697; the sequence is QLHYSIPEEA…NAEASLVDVN (668 aa). An intrachain disulfide couples cysteine 96 to cysteine 102. 2 N-linked (GlcNAc...) asparagine glycosylation sites follow: asparagine 257 and asparagine 265. The N-linked (GlcNAc...) asparagine glycan is linked to asparagine 548. The helical transmembrane segment at 698 to 718 threads the bilayer; that stretch reads VYLIIAICAVSSLLVLTLLLY. Residues 719–947 lie on the Cytoplasmic side of the membrane; sequence SALRCSTVPS…GNSTTDNSDQ (229 aa). PXXP repeat units lie at residues 734 to 737, 774 to 777, 796 to 799, 829 to 832, 870 to 873, and 888 to 891; these read PPKP, PSLS, PRQP, PGGP, PGNP, and PGSP. A 6 X 4 AA repeats of P-X-X-P region spans residues 734–891; it reads PPKPVMVCSS…PDKFIIPGSP (158 aa). The tract at residues 738 to 947 is required for interaction with FYN; the sequence is VMVCSSAVGS…GNSTTDNSDQ (210 aa). 2 disordered regions span residues 761 to 805 and 824 to 853; these read GEYP…DWRY and ILRAGPGGPDQQWPTVSSATPEPEAGEVSP. A disordered region spans residues 897-947; that stretch reads RQESANNQIDKSDFITFGKKEETKKKKKKKKGNKTQEKKEKGNSTTDNSDQ. Over residues 906 to 920 the composition is skewed to basic and acidic residues; that stretch reads DKSDFITFGKKEETK.

As to quaternary structure, forms homodimers in trans (molecules expressed by two different cells). Forms promiscuous heterodimers in cis (at the plasma membrane of the same cell) with other protocadherins. Interacts with FYN. As to expression, detected in brain.

It localises to the cell membrane. Calcium-dependent cell-adhesion protein involved in cells self-recognition and non-self discrimination. Thereby, it is involved in the establishment and maintenance of specific neuronal connections in the brain. The polypeptide is Protocadherin alpha-4 (Rattus norvegicus (Rat)).